Consider the following 110-residue polypeptide: Parvalbumin alpha (110 aa).

Position 2 is an N-acetylserine (Ser2). A phosphoserine mark is found at Ser2 and Ser24. EF-hand domains lie at Lys39–Asp74 and Leu78–Ser110. Asp52, Asp54, Ser56, Phe58, Glu60, Glu63, Asp91, Asp93, Asp95, Lys97, and Glu102 together coordinate Ca(2+).

Functionally, in muscle, parvalbumin is thought to be involved in relaxation after contraction. It binds two calcium ions. This is Parvalbumin alpha (PVALB) from Homo sapiens (Human).